Here is a 78-residue protein sequence, read N- to C-terminus: Acyl carrier protein (78 aa).

In terms of domain architecture, Carrier spans 2-77 (SNIEQQVKKI…LAIDYINAHN (76 aa)). Ser37 carries the post-translational modification O-(pantetheine 4'-phosphoryl)serine.

The protein belongs to the acyl carrier protein (ACP) family. Post-translationally, 4'-phosphopantetheine is transferred from CoA to a specific serine of apo-ACP by AcpS. This modification is essential for activity because fatty acids are bound in thioester linkage to the sulfhydryl of the prosthetic group.

The protein resides in the cytoplasm. It participates in lipid metabolism; fatty acid biosynthesis. Carrier of the growing fatty acid chain in fatty acid biosynthesis. This Neisseria gonorrhoeae (strain ATCC 700825 / FA 1090) protein is Acyl carrier protein.